Here is a 346-residue protein sequence, read N- to C-terminus: Low specificity L-threonine aldolase (346 aa).

Lys207 bears the N6-(pyridoxal phosphate)lysine mark.

Belongs to the threonine aldolase family. As to quaternary structure, homotetramer. Requires pyridoxal 5'-phosphate as cofactor.

The enzyme catalyses L-threonine = acetaldehyde + glycine. It carries out the reaction L-allo-threonine = acetaldehyde + glycine. Catalyzes the cleavage of L-allo-threonine and L-threonine to glycine and acetaldehyde. This is Low specificity L-threonine aldolase (ltaE) from Pseudomonas aeruginosa (strain ATCC 15692 / DSM 22644 / CIP 104116 / JCM 14847 / LMG 12228 / 1C / PRS 101 / PAO1).